The following is a 264-amino-acid chain: Thymidylate synthase (264 aa).

Arg-21 provides a ligand contact to dUMP. Residue His-51 participates in (6R)-5,10-methylene-5,6,7,8-tetrahydrofolate binding. DUMP is bound at residue 126-127 (RR). The Nucleophile role is filled by Cys-146. Residues 166-169 (RSAD), Asn-177, and 207-209 (HLY) each bind dUMP. Residue Asp-169 participates in (6R)-5,10-methylene-5,6,7,8-tetrahydrofolate binding. Residue Ala-263 coordinates (6R)-5,10-methylene-5,6,7,8-tetrahydrofolate.

It belongs to the thymidylate synthase family. Bacterial-type ThyA subfamily. Homodimer.

Its subcellular location is the cytoplasm. It carries out the reaction dUMP + (6R)-5,10-methylene-5,6,7,8-tetrahydrofolate = 7,8-dihydrofolate + dTMP. It functions in the pathway pyrimidine metabolism; dTTP biosynthesis. Its function is as follows. Catalyzes the reductive methylation of 2'-deoxyuridine-5'-monophosphate (dUMP) to 2'-deoxythymidine-5'-monophosphate (dTMP) while utilizing 5,10-methylenetetrahydrofolate (mTHF) as the methyl donor and reductant in the reaction, yielding dihydrofolate (DHF) as a by-product. This enzymatic reaction provides an intracellular de novo source of dTMP, an essential precursor for DNA biosynthesis. The protein is Thymidylate synthase of Dechloromonas aromatica (strain RCB).